The chain runs to 493 residues: Probable glycine dehydrogenase (decarboxylating) subunit 2 (493 aa).

Lysine 269 carries the N6-(pyridoxal phosphate)lysine modification.

Belongs to the GcvP family. C-terminal subunit subfamily. As to quaternary structure, the glycine cleavage system is composed of four proteins: P, T, L and H. In this organism, the P 'protein' is a heterodimer of two subunits. Pyridoxal 5'-phosphate is required as a cofactor.

It catalyses the reaction N(6)-[(R)-lipoyl]-L-lysyl-[glycine-cleavage complex H protein] + glycine + H(+) = N(6)-[(R)-S(8)-aminomethyldihydrolipoyl]-L-lysyl-[glycine-cleavage complex H protein] + CO2. Functionally, the glycine cleavage system catalyzes the degradation of glycine. The P protein binds the alpha-amino group of glycine through its pyridoxal phosphate cofactor; CO(2) is released and the remaining methylamine moiety is then transferred to the lipoamide cofactor of the H protein. The chain is Probable glycine dehydrogenase (decarboxylating) subunit 2 from Chloroherpeton thalassium (strain ATCC 35110 / GB-78).